Here is a 344-residue protein sequence, read N- to C-terminus: Arginine N-succinyltransferase (344 aa).

Succinyl-CoA is bound at residue Leu125. The Proton donor role is filled by His229.

It belongs to the arginine N-succinyltransferase family.

It carries out the reaction succinyl-CoA + L-arginine = N(2)-succinyl-L-arginine + CoA + H(+). It participates in amino-acid degradation; L-arginine degradation via AST pathway; L-glutamate and succinate from L-arginine: step 1/5. In terms of biological role, catalyzes the transfer of succinyl-CoA to arginine to produce N(2)-succinylarginine. This Shigella sonnei (strain Ss046) protein is Arginine N-succinyltransferase.